The sequence spans 385 residues: Succinate--CoA ligase [ADP-forming] subunit beta (385 aa).

The ATP-grasp domain occupies 9 to 244; that stretch reads KALFRTFGVP…LDEEDPLEVE (236 aa). ATP contacts are provided by residues lysine 46, 53-55, glutamate 99, glutamine 102, and glutamate 107; that span reads GRG. Residues asparagine 199 and aspartate 213 each coordinate Mg(2+). Substrate-binding positions include asparagine 264 and 321–323; that span reads GIL.

This sequence belongs to the succinate/malate CoA ligase beta subunit family. Heterotetramer of two alpha and two beta subunits. Mg(2+) is required as a cofactor.

It carries out the reaction succinate + ATP + CoA = succinyl-CoA + ADP + phosphate. The enzyme catalyses GTP + succinate + CoA = succinyl-CoA + GDP + phosphate. It functions in the pathway carbohydrate metabolism; tricarboxylic acid cycle; succinate from succinyl-CoA (ligase route): step 1/1. Its function is as follows. Succinyl-CoA synthetase functions in the citric acid cycle (TCA), coupling the hydrolysis of succinyl-CoA to the synthesis of either ATP or GTP and thus represents the only step of substrate-level phosphorylation in the TCA. The beta subunit provides nucleotide specificity of the enzyme and binds the substrate succinate, while the binding sites for coenzyme A and phosphate are found in the alpha subunit. In Desulforapulum autotrophicum (strain ATCC 43914 / DSM 3382 / VKM B-1955 / HRM2) (Desulfobacterium autotrophicum), this protein is Succinate--CoA ligase [ADP-forming] subunit beta.